We begin with the raw amino-acid sequence, 69 residues long: Putative membrane protein insertion efficiency factor (69 aa).

This sequence belongs to the UPF0161 family.

Its subcellular location is the cell inner membrane. Could be involved in insertion of integral membrane proteins into the membrane. In Syntrophotalea carbinolica (strain DSM 2380 / NBRC 103641 / GraBd1) (Pelobacter carbinolicus), this protein is Putative membrane protein insertion efficiency factor.